Here is a 239-residue protein sequence, read N- to C-terminus: Type II restriction enzyme Eco47II (239 aa).

It carries out the reaction Endonucleolytic cleavage of DNA to give specific double-stranded fragments with terminal 5'-phosphates.. In terms of biological role, a P subtype restriction enzyme that recognizes the double-stranded sequence 5'-GGNCC-3'; the cleavage site is unknown. The sequence is that of Type II restriction enzyme Eco47II from Escherichia coli.